The sequence spans 157 residues: D-aminoacyl-tRNA deacylase (157 aa).

A Gly-cisPro motif, important for rejection of L-amino acids motif is present at residues 137 to 138 (GP).

It belongs to the DTD family. Homodimer.

It is found in the cytoplasm. It catalyses the reaction glycyl-tRNA(Ala) + H2O = tRNA(Ala) + glycine + H(+). The enzyme catalyses a D-aminoacyl-tRNA + H2O = a tRNA + a D-alpha-amino acid + H(+). In terms of biological role, an aminoacyl-tRNA editing enzyme that deacylates mischarged D-aminoacyl-tRNAs. Also deacylates mischarged glycyl-tRNA(Ala), protecting cells against glycine mischarging by AlaRS. Acts via tRNA-based rather than protein-based catalysis; rejects L-amino acids rather than detecting D-amino acids in the active site. By recycling D-aminoacyl-tRNA to D-amino acids and free tRNA molecules, this enzyme counteracts the toxicity associated with the formation of D-aminoacyl-tRNA entities in vivo and helps enforce protein L-homochirality. The chain is D-aminoacyl-tRNA deacylase from Cyanothece sp. (strain PCC 7425 / ATCC 29141).